We begin with the raw amino-acid sequence, 250 residues long: mRNA-decapping protein g5R (250 aa).

The Nudix hydrolase domain maps to 97-239 (QKFRKNWLLP…NLEPMIGPAF (143 aa)). A Nudix box motif is present at residues 132–153 (GKPKEDESDLTCAIREFEEETG). Residue glutamate 138 participates in Mg(2+) binding. Catalysis depends on glutamate 147, which acts as the Nucleophile. Residues glutamate 151 and aspartate 173 each coordinate Mg(2+).

It belongs to the Nudix hydrolase family. DIPP subfamily. Interacts with host RPL23A. The cofactor is Mg(2+). Requires Mn(2+) as cofactor.

It localises to the host rough endoplasmic reticulum. The enzyme catalyses diphospho-myo-inositol polyphosphate + H2O = myo-inositol polyphosphate + phosphate.. In terms of biological role, decapping enzyme required for the removal of the 5'-end m7GpppN cap tethered to viral and host mRNAs to allow their decay in cells. May therefore accelerate viral and cellular mRNA turnover to eliminate competing host mRNAs and allow stage-specific synthesis of viral proteins. Acceleration of the turnover of cellular transcripts may even promote the shutoff of host protein synthesis. In addition to the mRNA cap, g5R also efficiently hydrolyzes diphosphoinositol polyphosphates. Down-regulation of the level of PP-InsP5 (diphosphoinositol pentakisphosphate) may play a role in viral manipulation of the cellular secretory pathway, a step necessary for the formation of virions. Binds viral and cellular poly(A) mRNAs, thereby decreasing both types of mRNAs. This chain is mRNA-decapping protein g5R, found in Ornithodoros (relapsing fever ticks).